The primary structure comprises 221 residues: Nucleolar protein 3 (221 aa).

Gly-2 carries the N-myristoyl glycine lipid modification. A CARD domain is found at 4–95; that stretch reads MQERPSETID…MPDPAWDWQH (92 aa). Positions 20–70 are essential for interaction with BAX; sequence VETLQADSGLLLDALVARGVLTGPEYEALDALPDAERRVRRLLLLVQSKGE. Residues 107 to 221 form a disordered region; the sequence is PPCPGHWTPE…GDESEGCENT (115 aa). A compositionally biased stretch (acidic residues) spans 132-143; that stretch reads EEEEIGGPEDSE. Thr-149 carries the post-translational modification Phosphothreonine; by CK2. 2 stretches are compositionally biased toward acidic residues: residues 165 to 201 and 209 to 221; these read PDLEQEMEPEPEPEVEPEPEPEPEPEPEPEPEPEPEP and FQEGDESEGCENT.

As to quaternary structure, oligomerizes (via CARD doamin). Interacts (via CARD domain) with CASP2; inhibits CASP2 activity in a phosphorylation-dependent manner. Interacts with CASP8; decreases CASP8 activity in a mitochondria localization- and phosphorylation-dependent manner and this interaction is dissociated by calcium. Interacts with TFPT; translocates NOL3 into the nucleus and negatively regulated TFPT-induced cell death. Interacts directly (via CARD domain) with FAS and FADD (via DED domain); inhibits death-inducing signaling complex (DISC) assembly by inhibiting the increase in FAS-FADD binding induced by FAS activation. Interacts (via CARD domain) with BAX (via a C-terminal 33 residues); inhibits BAX activation and translocation and consequently cytochrome c release from mitochondria. Interacts with PPM1G; may dephosphorylate NOL3. Interacts (via CARD domain) with BBC3 (via BH3 domain); preventing the association of BBC3 with BCL2 and resulting in activation of CASP8. Interacts (via CARD domain) with BAD(via BH3 domain); preventing the association of BAD with BCL2. Interacts directly (via CARD domain) with TNFRSF1A; inhibits TNF-signaling pathway. Post-translationally, phosphorylation at Thr-149 is required for its antiapoptotic effect by blocking death-inducing signaling complex (DISC) activity through the control of interaction with CASP8. Phosphorylation at Thr-149 results in translocation to mitochondria and this translocation enables the binding to CASP8. Dephosphorylated at Thr-149 by calcineurin; doesn't inhibit the association between FADD and CASP8 and the consequent apoptosis. Polyubiquitinated by MDM2; promoting proteasomal-dependent degradation in response to apoptotic stimuli. As to expression, highly expressed in skeletal muscle, heart and medulla.

It localises to the cytoplasm. It is found in the mitochondrion. The protein localises to the sarcoplasmic reticulum. The protein resides in the membrane. Functionally, apoptosis repressor that blocks multiple modes of cell death. Inhibits extrinsic apoptotic pathways through two different ways. Firstly by interacting with FAS and FADD upon FAS activation blocking death-inducing signaling complex (DISC) assembly. Secondly by interacting with CASP8 in a mitochondria localization- and phosphorylation-dependent manner, limiting the amount of soluble CASP8 available for DISC-mediated activation. Inhibits intrinsic apoptotic pathway in response to a wide range of stresses, through its interaction with BAX resulting in BAX inactivation, preventing mitochondrial dysfunction and release of pro-apoptotic factors. Inhibits calcium-mediated cell death by functioning as a cytosolic calcium buffer, dissociating its interaction with CASP8 and maintaining calcium homeostasis. Negatively regulates oxidative stress-induced apoptosis by phosphorylation-dependent suppression of the mitochondria-mediated intrinsic pathway, by blocking CASP2 activation and BAX translocation. Negatively regulates hypoxia-induced apoptosis in part by inhibiting the release of cytochrome c from mitochondria in a caspase-independent manner. Also inhibits TNF-induced necrosis by preventing TNF-signaling pathway through TNFRSF1A interaction abrogating the recruitment of RIPK1 to complex I. Finally through its role as apoptosis repressor, promotes vascular remodeling through inhibition of apoptosis and stimulation of proliferation, in response to hypoxia. Inhibits too myoblast differentiation through caspase inhibition. The sequence is that of Nucleolar protein 3 (Nol3) from Rattus norvegicus (Rat).